A 173-amino-acid polypeptide reads, in one-letter code: Transcription factor E (173 aa).

Residues 6-89 form the HTH TFE/IIEalpha-type domain; sequence PLEELLEFVR…YWYVDRETLN (84 aa).

Belongs to the TFE family. Monomer. Interaction with RNA polymerase subunits RpoF and RpoE is necessary for Tfe stimulatory transcription activity. Able to interact with Tbp and RNA polymerase in the absence of DNA promoter. Interacts both with the preinitiation and elongation complexes.

In terms of biological role, transcription factor that plays a role in the activation of archaeal genes transcribed by RNA polymerase. Facilitates transcription initiation by enhancing TATA-box recognition by TATA-box-binding protein (Tbp), and transcription factor B (Tfb) and RNA polymerase recruitment. Not absolutely required for transcription in vitro, but particularly important in cases where Tbp or Tfb function is not optimal. It dynamically alters the nucleic acid-binding properties of RNA polymerases by stabilizing the initiation complex and destabilizing elongation complexes. Seems to translocate with the RNA polymerase following initiation and acts by binding to the non template strand of the transcription bubble in elongation complexes. This Ignicoccus hospitalis (strain KIN4/I / DSM 18386 / JCM 14125) protein is Transcription factor E.